Reading from the N-terminus, the 469-residue chain is Extracellular endo-alpha-(1-&gt;5)-L-arabinanase 2 (469 aa).

The N-terminal stretch at 1–26 (MFNRLFRVCFLAALIMAFTLPNSVYA) is a signal peptide. Asp-38 functions as the Proton acceptor in the catalytic mechanism. Substrate is bound by residues Asp-38, Asp-122, 168 to 171 (NVVD), 188 to 190 (SYS), and 220 to 224 (HSRIE). Glu-224 functions as the Proton donor in the catalytic mechanism. Residue His-318 participates in Ca(2+) binding.

This sequence belongs to the glycosyl hydrolase 43 family. In terms of assembly, homodimer. Ca(2+) is required as a cofactor.

It is found in the secreted. The catalysed reaction is Endohydrolysis of (1-&gt;5)-alpha-arabinofuranosidic linkages in (1-&gt;5)-arabinans.. Its pathway is glycan metabolism; L-arabinan degradation. Involved in the degradation of arabinan and is a key enzyme in the complete degradation of the plant cell wall. Catalyzes the internal cleavage of alpha-(1-&gt;5)-L-arabinofuranosyl residues of the alpha-1,5-L-arabinan to produce arabino-oligosaccharides and L-arabinose. It is also active toward linear branched sugar beet arabinan, and pectin from apple. The polypeptide is Extracellular endo-alpha-(1-&gt;5)-L-arabinanase 2 (abn2) (Bacillus subtilis (strain 168)).